Consider the following 213-residue polypeptide: Small ribosomal subunit protein uS3 (213 aa).

Positions 38–106 (IRKYVKEKIF…EFALEVSEIR (69 aa)) constitute a KH type-2 domain.

Belongs to the universal ribosomal protein uS3 family. In terms of assembly, part of the 30S ribosomal subunit. Forms a tight complex with proteins S10 and S14.

Its function is as follows. Binds the lower part of the 30S subunit head. Binds mRNA in the 70S ribosome, positioning it for translation. The sequence is that of Small ribosomal subunit protein uS3 from Maridesulfovibrio salexigens (strain ATCC 14822 / DSM 2638 / NCIMB 8403 / VKM B-1763) (Desulfovibrio salexigens).